The chain runs to 830 residues: Lon protease (830 aa).

A Lon N-terminal domain is found at 20–215 (LPAVAIRDVV…LLIKILANEV (196 aa)). ATP is bound at residue 367–374 (GPPGVGKT). The Lon proteolytic domain occupies 602–781 (ENGVGISTGL…DEIVKIAFEK (180 aa)). Active-site residues include serine 687 and lysine 730. The tract at residues 784-830 (PKSSFKKSKTAPKKESAKKAAKSKKPAVKKPAVKKTKQVKKTAKKKK) is disordered. Residues 802 to 830 (KAAKSKKPAVKKPAVKKTKQVKKTAKKKK) show a composition bias toward basic residues.

Belongs to the peptidase S16 family. As to quaternary structure, homohexamer. Organized in a ring with a central cavity.

It is found in the cytoplasm. The enzyme catalyses Hydrolysis of proteins in presence of ATP.. Functionally, ATP-dependent serine protease that mediates the selective degradation of mutant and abnormal proteins as well as certain short-lived regulatory proteins. Required for cellular homeostasis and for survival from DNA damage and developmental changes induced by stress. Degrades polypeptides processively to yield small peptide fragments that are 5 to 10 amino acids long. Binds to DNA in a double-stranded, site-specific manner. This chain is Lon protease, found in Elusimicrobium minutum (strain Pei191).